A 75-amino-acid polypeptide reads, in one-letter code: Porwaprin-b (75 aa).

A signal peptide spans 1 to 24 (MSSGGLLLLLGLLTLWAELTPVSG). A WAP domain is found at 27 to 72 (RPVKPGLCPPRPQKPPCVKECKNDWSCRGEQKCCHYGCIYECRDPI). Intrachain disulfides connect Cys-34-Cys-60, Cys-43-Cys-64, Cys-47-Cys-59, and Cys-53-Cys-68.

This sequence belongs to the venom waprin family. In terms of tissue distribution, expressed by the venom gland.

Its subcellular location is the secreted. In terms of biological role, damages membranes of susceptible bacteria. Has no hemolytic activity. Not toxic to mice. Does not inhibit the proteinases elastase and cathepsin G. The sequence is that of Porwaprin-b from Pseudechis porphyriacus (Red-bellied black snake).